The chain runs to 405 residues: Cysteine desulfurase IscS (405 aa).

Pyridoxal 5'-phosphate is bound by residues 75–76 (AT), Asn-156, Gln-184, and 204–206 (SAH). Position 207 is an N6-(pyridoxal phosphate)lysine (Lys-207). Thr-244 contributes to the pyridoxal 5'-phosphate binding site. Catalysis depends on Cys-329, which acts as the Cysteine persulfide intermediate. Cys-329 is a binding site for [2Fe-2S] cluster.

This sequence belongs to the class-V pyridoxal-phosphate-dependent aminotransferase family. NifS/IscS subfamily. As to quaternary structure, homodimer. Forms a heterotetramer with IscU, interacts with other sulfur acceptors. It depends on pyridoxal 5'-phosphate as a cofactor.

Its subcellular location is the cytoplasm. It catalyses the reaction (sulfur carrier)-H + L-cysteine = (sulfur carrier)-SH + L-alanine. It participates in cofactor biosynthesis; iron-sulfur cluster biosynthesis. Its function is as follows. Master enzyme that delivers sulfur to a number of partners involved in Fe-S cluster assembly, tRNA modification or cofactor biosynthesis. Catalyzes the removal of elemental sulfur atoms from cysteine to produce alanine. Functions as a sulfur delivery protein for Fe-S cluster synthesis onto IscU, an Fe-S scaffold assembly protein, as well as other S acceptor proteins. In Methylobacillus flagellatus (strain ATCC 51484 / DSM 6875 / VKM B-1610 / KT), this protein is Cysteine desulfurase IscS.